We begin with the raw amino-acid sequence, 352 residues long: S-adenosylmethionine:tRNA ribosyltransferase-isomerase (352 aa).

It belongs to the QueA family. Monomer.

The protein resides in the cytoplasm. It catalyses the reaction 7-aminomethyl-7-carbaguanosine(34) in tRNA + S-adenosyl-L-methionine = epoxyqueuosine(34) in tRNA + adenine + L-methionine + 2 H(+). It functions in the pathway tRNA modification; tRNA-queuosine biosynthesis. Its function is as follows. Transfers and isomerizes the ribose moiety from AdoMet to the 7-aminomethyl group of 7-deazaguanine (preQ1-tRNA) to give epoxyqueuosine (oQ-tRNA). The polypeptide is S-adenosylmethionine:tRNA ribosyltransferase-isomerase (Vibrio cholerae serotype O1 (strain ATCC 39315 / El Tor Inaba N16961)).